Reading from the N-terminus, the 293-residue chain is 4-diphosphocytidyl-2-C-methyl-D-erythritol kinase (293 aa).

Residue Lys-23 is part of the active site. 109–119 contacts ATP; the sequence is PVAAGIGGGSA. The active site involves Asp-151.

Belongs to the GHMP kinase family. IspE subfamily.

The enzyme catalyses 4-CDP-2-C-methyl-D-erythritol + ATP = 4-CDP-2-C-methyl-D-erythritol 2-phosphate + ADP + H(+). It functions in the pathway isoprenoid biosynthesis; isopentenyl diphosphate biosynthesis via DXP pathway; isopentenyl diphosphate from 1-deoxy-D-xylulose 5-phosphate: step 3/6. Its function is as follows. Catalyzes the phosphorylation of the position 2 hydroxy group of 4-diphosphocytidyl-2C-methyl-D-erythritol. The protein is 4-diphosphocytidyl-2-C-methyl-D-erythritol kinase of Rhizorhabdus wittichii (strain DSM 6014 / CCUG 31198 / JCM 15750 / NBRC 105917 / EY 4224 / RW1) (Sphingomonas wittichii).